The primary structure comprises 669 residues: Cysteine-rich receptor-like protein kinase 10 (669 aa).

Positions 1–34 (MRRNTDQESPIMSYYSSFFFLFLFSFLTSFRVSA) are cleaved as a signal peptide. Over 35–285 (QDPTYVYHTC…PRSGKDGNSK (251 aa)) the chain is Extracellular. Gnk2-homologous domains are found at residues 38–142 (TYVY…NQNI) and 148–252 (TTGG…IYAF). N-linked (GlcNAc...) asparagine glycans are attached at residues N49, N53, N71, and N80. 2 cysteine pairs are disulfide-bonded: C96–C105 and C108–C133. N114, N159, N185, and N196 each carry an N-linked (GlcNAc...) asparagine glycan. 2 cysteine pairs are disulfide-bonded: C209–C218 and C221–C243. Pro residues predominate over residues 260 to 274 (PPPPPPSISTPPVSA). The interval 260–280 (PPPPPPSISTPPVSAPPRSGK) is disordered. A helical membrane pass occupies residues 286-306 (VLVIAIVVPIIVAVLLFIAGY). The Cytoplasmic portion of the chain corresponds to 307–669 (CFLTRRARKS…DASITDIHPR (363 aa)). One can recognise a Protein kinase domain in the interval 348–634 (FVESNKIGQG…TLPVPRQPGL (287 aa)). ATP-binding positions include 354-362 (IGQGGFGEV) and K376. Y421 carries the post-translational modification Phosphotyrosine. D473 acts as the Proton acceptor in catalysis. S477 carries the post-translational modification Phosphoserine. Phosphothreonine is present on T513. Position 521 is a phosphotyrosine (Y521).

Belongs to the protein kinase superfamily. Ser/Thr protein kinase family. CRK subfamily. Interacts with CRKIP1 (KAPP), CRKIP2 and CRKIP3, three kinase-associated type 2C proteins.

Its subcellular location is the membrane. It catalyses the reaction L-seryl-[protein] + ATP = O-phospho-L-seryl-[protein] + ADP + H(+). The enzyme catalyses L-threonyl-[protein] + ATP = O-phospho-L-threonyl-[protein] + ADP + H(+). This chain is Cysteine-rich receptor-like protein kinase 10 (CRK10), found in Arabidopsis thaliana (Mouse-ear cress).